The following is a 348-amino-acid chain: Large ribosomal subunit protein uL3m (348 aa).

Residues 1–40 constitute a mitochondrion transit peptide; sequence MPGWRLLTQVGAQVLGRLGDGLGAALGPGNRTHIWLFVRG.

Belongs to the universal ribosomal protein uL3 family. Component of the mitochondrial large ribosomal subunit (mt-LSU). Mature mammalian 55S mitochondrial ribosomes consist of a small (28S) and a large (39S) subunit. The 28S small subunit contains a 12S ribosomal RNA (12S mt-rRNA) and 30 different proteins. The 39S large subunit contains a 16S rRNA (16S mt-rRNA), a copy of mitochondrial valine transfer RNA (mt-tRNA(Val)), which plays an integral structural role, and 52 different proteins.

Its subcellular location is the mitochondrion. The polypeptide is Large ribosomal subunit protein uL3m (MRPL3) (Homo sapiens (Human)).